The sequence spans 191 residues: Probable GTP-binding protein EngB (191 aa).

The EngB-type G domain occupies 22–191 (DFDHFLILGR…KLINEEFSNE (170 aa)). Residues 30-37 (GRSNVGKS), 57-61 (GKTIT), 75-78 (DAPG), 142-145 (TKYD), and 172-174 (TSS) each bind GTP. Mg(2+) contacts are provided by Ser37 and Thr59.

The protein belongs to the TRAFAC class TrmE-Era-EngA-EngB-Septin-like GTPase superfamily. EngB GTPase family. Mg(2+) serves as cofactor.

Necessary for normal cell division and for the maintenance of normal septation. The polypeptide is Probable GTP-binding protein EngB (Acholeplasma laidlawii (strain PG-8A)).